A 543-amino-acid polypeptide reads, in one-letter code: Proline--tRNA ligase, chloroplastic/mitochondrial (543 aa).

Residues 41-63 (ATAPSGTASPETKSSEVDRLRSD) are disordered. A compositionally biased stretch (basic and acidic residues) spans 53-63 (KSSEVDRLRSD).

Belongs to the class-II aminoacyl-tRNA synthetase family.

Its subcellular location is the plastid. The protein localises to the chloroplast. It localises to the mitochondrion. It catalyses the reaction tRNA(Pro) + L-proline + ATP = L-prolyl-tRNA(Pro) + AMP + diphosphate. Its function is as follows. Catalyzes the attachment of proline to tRNA(Pro) in a two-step reaction: proline is first activated by ATP to form Pro-AMP and then transferred to the acceptor end of tRNA(Pro). This chain is Proline--tRNA ligase, chloroplastic/mitochondrial, found in Arabidopsis thaliana (Mouse-ear cress).